The chain runs to 141 residues: VLSGSDKTNVKGVFAKIGGHAEDYGAETLERMFITYPQTKTYFPHFDLQHGSAQIKGHGKKVVGALIEAANHIDDIAASLSKLSDLHAQKLRVDPVNFKLLGQCFLVVVAIHHPSVLTPEVHASLDKFLCAVGNVLTAKYR.

The Globin domain maps to 1–141; the sequence is VLSGSDKTNV…VGNVLTAKYR (141 aa). His-58 serves as a coordination point for O2. A heme b-binding site is contributed by His-87.

Belongs to the globin family. As to quaternary structure, heterotetramer of two alpha chains and two beta chains. As to expression, red blood cells.

Functionally, involved in oxygen transport from the lung to the various peripheral tissues. The chain is Hemoglobin subunit alpha-A (HBAA) from Vultur gryphus (Andean condor).